Consider the following 494-residue polypeptide: Protein DETOXIFICATION 21 (494 aa).

Ala2 carries the N-acetylalanine modification. Helical transmembrane passes span 40-60, 73-95, 123-143, 158-178, 188-208, 217-237, 268-288, 297-317, 340-360, 384-404, 416-436, and 441-461; these read LWIV…VSII, LAAY…LGMA, IVLT…GPIL, IIAL…TCQM, IIAY…WLLM, GAMT…LLFV, GGML…TGNL, ALAI…GFLA, LTAV…FLFL, LLAF…VAVG, LACY…VVGL, and VWIG…VMTL.

Belongs to the multi antimicrobial extrusion (MATE) (TC 2.A.66.1) family.

It localises to the membrane. In Arabidopsis thaliana (Mouse-ear cress), this protein is Protein DETOXIFICATION 21.